The primary structure comprises 218 residues: Uracil-DNA glycosylase (218 aa).

The active-site Proton acceptor is Asp59.

It belongs to the uracil-DNA glycosylase (UDG) superfamily. UNG family.

It is found in the cytoplasm. The catalysed reaction is Hydrolyzes single-stranded DNA or mismatched double-stranded DNA and polynucleotides, releasing free uracil.. Its function is as follows. Excises uracil residues from the DNA which can arise as a result of misincorporation of dUMP residues by DNA polymerase or due to deamination of cytosine. This chain is Uracil-DNA glycosylase, found in Staphylococcus aureus (strain JH1).